The chain runs to 236 residues: MTKRYWNIDLEEMMRAGVHFGHGTRKWNPRMAPYISAKRKGIHIINLTRTARFLSEACDLVFDAASKGKQFLIVGTKNKAADLVSRAAIRARCHYVNKKWLGGMLTNWSTTEKRLHKFRDLRTEQKTEGFNRLPKRDAAVLKRQLSRLKTYLGGIKYMTGLPDIVIIIDQQEEYTALRECITLGIPTISLIDTNCNPDLADISIPANDDAIASIRFTLNKLVFAICEGRSSYIQNS.

This sequence belongs to the universal ribosomal protein uS2 family.

The protein resides in the plastid. The protein localises to the chloroplast. In Barbarea verna (Land cress), this protein is Small ribosomal subunit protein uS2c (rps2).